Consider the following 675-residue polypeptide: Cysteine-rich receptor-like protein kinase 25 (675 aa).

A signal peptide spans 1-25; sequence MSSCFKSSVSLFSVFLFMILKTVTS. Over 26–281 the chain is Extracellular; the sequence is DPTYLYHICP…IPSEKGKGKN (256 aa). Gnk2-homologous domains follow at residues 28 to 134 and 140 to 247; these read TYLY…NQSI and IRPG…LYPF. 10 N-linked (GlcNAc...) asparagine glycosylation sites follow: Asn36, Asn43, Asn77, Asn106, Asn131, Asn151, Asn161, Asn188, Asn249, and Asn281. Residues 282–302 form a helical membrane-spanning segment; sequence LTVIVTAIAVPVSVCVLLLGA. The Cytoplasmic portion of the chain corresponds to 303–675; the sequence is MCWLLARRRN…DSSITIVYPR (373 aa). Residues 347–622 enclose the Protein kinase domain; that stretch reads FSESNKLGHG…DILVMMNSFT (276 aa). ATP is bound by residues 353–361 and Lys375; that span reads LGHGGFGEV. A Phosphotyrosine modification is found at Tyr420. The Proton acceptor role is filled by Asp472. The residue at position 476 (Ser476) is a Phosphoserine. At Thr512 the chain carries Phosphothreonine. Position 520 is a phosphotyrosine (Tyr520). The interval 638–661 is disordered; the sequence is MKDSRDPRSGGSASDHSATSKSLP. A compositionally biased stretch (polar residues) spans 648-661; sequence GSASDHSATSKSLP.

This sequence belongs to the protein kinase superfamily. Ser/Thr protein kinase family. CRK subfamily.

It is found in the membrane. It catalyses the reaction L-seryl-[protein] + ATP = O-phospho-L-seryl-[protein] + ADP + H(+). The enzyme catalyses L-threonyl-[protein] + ATP = O-phospho-L-threonyl-[protein] + ADP + H(+). The sequence is that of Cysteine-rich receptor-like protein kinase 25 (CRK25) from Arabidopsis thaliana (Mouse-ear cress).